Consider the following 103-residue polypeptide: MSGRGKGGKGLGKGGAKRHRKVLRDNIQGITKPAIRRLARRGGVKRISGLIYEETRGVLKVFLENVIRDAVTYTEHAKRKTVTAMDVVYALKRQERTLYGFGG.

Residues 1–14 (MSGRGKGGKGLGKG) are compositionally biased toward gly residues. Residues 1 to 20 (MSGRGKGGKGLGKGGAKRHR) form a disordered region. Residue S2 is modified to N-acetylserine. At S2 the chain carries Phosphoserine. Residue R4 is modified to Asymmetric dimethylarginine; by PRMT1; alternate. A Citrulline; alternate modification is found at R4. Position 4 is an omega-N-methylarginine; by PRMT1; alternate (R4). R4 carries the post-translational modification Symmetric dimethylarginine; by PRMT5 and PRMT7; alternate. Residues K6, K9, K13, and K17 each carry the N6-(2-hydroxyisobutyryl)lysine; alternate modification. K6 carries the post-translational modification N6-acetyl-N6-methyllysine; alternate. N6-acetyllysine occurs at positions 6, 9, 13, and 17. K6, K9, K13, and K17 each carry N6-butyryllysine; alternate. The residue at position 6 (K6) is an N6-glutaryllysine; alternate. N6-lactoyllysine; alternate is present on residues K6, K9, K13, and K17. Position 9 is an N6-propionyllysine; alternate (K9). The residue at position 13 (K13) is an N6-acetyl-N6-methyllysine; alternate. N6-glutaryllysine; alternate is present on K13. K13 carries the post-translational modification N6-methyllysine; alternate. K17 bears the N6-propionyllysine; alternate mark. K21 is subject to N6-methyllysine; alternate. K21 carries the post-translational modification N6,N6,N6-trimethyllysine; alternate. Residue K21 is modified to N6,N6-dimethyllysine; alternate. N6-(2-hydroxyisobutyryl)lysine; alternate is present on residues K32 and K45. Position 32 is an N6-acetyllysine (K32). N6-butyryllysine; alternate is present on residues K32 and K45. K32 carries the N6-glutaryllysine; alternate modification. N6-lactoyllysine; alternate is present on K32. N6-propionyllysine; alternate occurs at positions 32 and 45. K32 bears the N6-succinyllysine; alternate mark. K32 participates in a covalent cross-link: Glycyl lysine isopeptide (Lys-Gly) (interchain with G-Cter in UFM1); alternate. S48 carries the post-translational modification Phosphoserine. Y52 bears the Phosphotyrosine mark. K60 carries the N6-acetyllysine modification. K60, K78, and K80 each carry N6-glutaryllysine; alternate. K60 is subject to N6-(2-hydroxyisobutyryl)lysine. Residues K78 and K80 each carry the N6-(2-hydroxyisobutyryl)lysine; alternate modification. N6-butyryllysine; alternate occurs at positions 78 and 80. Position 78 is an N6-lactoyllysine; alternate (K78). An N6-propionyllysine; alternate mark is found at K78 and K80. Residue K78 is modified to N6-succinyllysine. K80 is subject to N6-acetyllysine. Phosphotyrosine is present on Y89. N6-(2-hydroxyisobutyryl)lysine; alternate is present on K92. K92 is subject to N6-butyryllysine; alternate. An N6-glutaryllysine; alternate modification is found at K92. K92 carries the post-translational modification N6-lactoyllysine; alternate. K92 bears the N6-propionyllysine; alternate mark. The residue at position 92 (K92) is an N6-succinyllysine; alternate. N6-acetyllysine; alternate is present on K92. K92 is covalently cross-linked (Glycyl lysine isopeptide (Lys-Gly) (interchain with G-Cter in ubiquitin); alternate).

This sequence belongs to the histone H4 family. The nucleosome is a histone octamer containing two molecules each of H2A, H2B, H3 and H4 assembled in one H3-H4 heterotetramer and two H2A-H2B heterodimers. The octamer wraps approximately 147 bp of DNA. Acetylation at Lys-6 (H4K5ac), Lys-9 (H4K8ac), Lys-13 (H4K12ac) and Lys-17 (H4K16ac) occurs in coding regions of the genome but not in heterochromatin. In terms of processing, citrullination at Arg-4 (H4R3ci) by PADI4 impairs methylation. Post-translationally, monomethylation and asymmetric dimethylation at Arg-4 (H4R3me1 and H4R3me2a, respectively) by PRMT1 favors acetylation at Lys-9 (H4K8ac) and Lys-13 (H4K12ac). Demethylation is performed by JMJD6. Symmetric dimethylation on Arg-4 (H4R3me2s) by the PRDM1/PRMT5 complex may play a crucial role in the germ-cell lineage. Monomethylated, dimethylated or trimethylated at Lys-21 (H4K20me1, H4K20me2, H4K20me3). Monomethylation is performed by KMT5A/SET8. Trimethylation is performed by KMT5B and KMT5C and induces gene silencing. Monomethylated at Lys-13 (H4K12me1) by N6AMT1; H4K12me1 modification is present at the promoters of numerous genes encoding cell cycle regulators. In terms of processing, acetyl-methylated at Lys-6 and Lys-13 (H4K5acme and H4K12acme, respectively), acetyl-methylation is an epigenetic mark of active chromatin associated with increased transcriptional initiation. Acetyl-methylation is formed by acetylation by EP300/p300 of lysine residues that are already monomethylated on the same side chain. H4K5acme and H4K12acme marks specifically bind BRD2. Post-translationally, ubiquitinated by the CUL4-DDB-RBX1 complex in response to ultraviolet irradiation. This may weaken the interaction between histones and DNA and facilitate DNA accessibility to repair proteins. Monoubiquitinated at Lys-92 of histone H4 (H4K91ub1) in response to DNA damage. The exact role of H4K91ub1 in DNA damage response is still unclear but it may function as a licensing signal for additional histone H4 post-translational modifications such as H4 Lys-21 methylation (H4K20me). Sumoylated, which is associated with transcriptional repression. In terms of processing, butyrylation of histones marks active promoters and competes with histone acetylation. Post-translationally, glutarylation at Lys-92 (H4K91glu) destabilizes nucleosomes by promoting dissociation of the H2A-H2B dimers from nucleosomes. Ufmylated; monofmylated by UFL1 at Lys-32 (H4K31Ufm1) in response to DNA damage. In terms of processing, lactylated in macrophages by EP300/P300 by using lactoyl-CoA directly derived from endogenous or exogenous lactate, leading to stimulates gene transcription. Delactylated by SIRT3 at Lys-17 (H4K16la).

It is found in the nucleus. It localises to the chromosome. In terms of biological role, core component of nucleosome. Nucleosomes wrap and compact DNA into chromatin, limiting DNA accessibility to the cellular machineries which require DNA as a template. Histones thereby play a central role in transcription regulation, DNA repair, DNA replication and chromosomal stability. DNA accessibility is regulated via a complex set of post-translational modifications of histones, also called histone code, and nucleosome remodeling. The protein is Histone H4 type VIII (H4-VIII) of Gallus gallus (Chicken).